A 392-amino-acid chain; its full sequence is GDSL esterase/lipase ESM1 (392 aa).

The first 28 residues, 1–28 (MADNLNLVSVLGVLLVLTIFHNPIIVYA), serve as a signal peptide directing secretion. The Nucleophile role is filled by S43. N-linked (GlcNAc...) asparagine glycans are attached at residues N146, N166, and N290. Active-site residues include D324 and H327.

The protein belongs to the 'GDSL' lipolytic enzyme family.

It localises to the secreted. Its function is as follows. Represses or inhibits nitriles production from methionine-derived and from indol-3-ylmethyl glucosinolates. Favors isothiocyanate production. The sequence is that of GDSL esterase/lipase ESM1 (ESM1) from Arabidopsis thaliana (Mouse-ear cress).